A 547-amino-acid chain; its full sequence is Carboxypeptidase N subunit 2 (547 aa).

Positions 1-21 (MFPGAWLCWVSLLLLARLTQP) are cleaved as a signal peptide. An LRRNT domain is found at 22 to 49 (CPVGCDCFGREVFCSDEQLADIPPDIPP). 3 N-linked (GlcNAc...) asparagine glycosylation sites follow: Asn74, Asn111, and Asn119. LRR repeat units lie at residues 98–119 (RLQDLEITGSPVSNLSAHIFSN), 122–143 (SLEKLTLDFDRLAGLPEDLFCH), 146–167 (ILESLQLQGNQLRTLPGRLFQS), 170–191 (DLRTLNLAQNLLTQLPKGAFQS), 194–215 (GLQMLKLSNNMLARLPEGALGS), 218–239 (SLQELFLDGNAITELSPHLFSQ), 242–263 (SLEMLWLQHNAICHLPVSLFSS), 266–287 (NLTFLSLKDNALRTLPEGLFAH), 290–311 (GLLHLSLSYNQLETIPEGAFTN), 314–335 (RLVSLTLSHNAITDLPEHVFRN), 338–359 (QLVKLSLDSNNLTALHPALFHN), and 362–383 (RLQLLNLSRNQLTTLPGGIFDT). 2 N-linked (GlcNAc...) asparagine glycosylation sites follow: Asn266 and Asn311. N-linked (GlcNAc...) asparagine glycans are attached at residues Asn348, Asn359, and Asn367. An LRRCT domain is found at 395-447 (NPWQCDCHLSYLTSWLRLYNNQISNTHTFCAGPAYLKGQLVPNLKQEQLICPV). N-linked (GlcNAc...) asparagine glycosylation is present at Asn520.

Tetramer of two catalytic chains and two glycosylated inactive chains.

It localises to the secreted. Functionally, the 83 kDa subunit binds and stabilizes the catalytic subunit at 37 degrees Celsius and keeps it in circulation. Under some circumstances it may be an allosteric modifier of the catalytic subunit. The chain is Carboxypeptidase N subunit 2 (Cpn2) from Mus musculus (Mouse).